The chain runs to 430 residues: Putative FBD-associated F-box protein At5g56440 (430 aa).

The F-box domain occupies 1-49 (MDRISLLPDDVVFKILSFVPTKVVVSTNLLSKRWRYLWKHVPKLDYRDP). The 51-residue stretch at 349–399 (QWEQPSSVPKCLISSLETVEWIDYKGREVEKKVVMYLLENSRQLKTMAIRS) folds into the FBD domain.

The sequence is that of Putative FBD-associated F-box protein At5g56440 from Arabidopsis thaliana (Mouse-ear cress).